Consider the following 310-residue polypeptide: Integrin-binding sialoprotein (310 aa).

Positions 1–16 (MKTVLILLSILGMACA) are cleaved as a signal peptide. Phosphoserine is present on residues Ser31, Ser62, Ser67, Ser75, Ser76, Ser98, and Ser106. The interval 61 to 284 (QSSSDSSEEN…NGDPRGDNYR (224 aa)) is disordered. Residues 62–74 (SSSDSSEENGNGD) are compositionally biased toward low complexity. Acidic residues-rich tracts occupy residues 75-87 (SSEEEEEEEETSN) and 96-108 (EDSDENEDEESEA). N-linked (GlcNAc...) asparagine glycosylation is present at Asn110. The residue at position 144 (Thr144) is a Phosphothreonine. The span at 152 to 174 (DESDEEEEEEEEEENEAEVDDNE) shows a compositional bias: acidic residues. Ser154 bears the Phosphoserine mark. The segment covering 175–187 (QGINGTSSNSTEV) has biased composition (polar residues). N-linked (GlcNAc...) asparagine glycosylation is found at Asn178 and Asn183. The segment covering 198–208 (NGEEDGEEESV) has biased composition (acidic residues). Over residues 209 to 227 (TEANTEGITVAGETTTSPN) the composition is skewed to polar residues. Phosphoserine is present on Ser273. Positions 279–281 (RGD) match the Integrin-binding motif motif. The residue at position 300 (Ser300) is a Phosphoserine. Residues Tyr306 and Tyr307 each carry the sulfotyrosine modification.

In terms of assembly, monomer. Interacts with integrins; the interaction promotes cell adhesion.

It localises to the secreted. Binds tightly to hydroxyapatite. Appears to form an integral part of the mineralized matrix. Probably important to cell-matrix interaction. Promotes adhesion and migration of various cells via the alpha-V/beta-3 integrin receptor (ITGAV:ITGB3). This Bos taurus (Bovine) protein is Integrin-binding sialoprotein (IBSP).